Reading from the N-terminus, the 59-residue chain is UPF0181 protein YoaH (59 aa).

It belongs to the UPF0181 family.

This Salmonella arizonae (strain ATCC BAA-731 / CDC346-86 / RSK2980) protein is UPF0181 protein YoaH.